Reading from the N-terminus, the 278-residue chain is 4-deoxy-L-threo-5-hexosulose-uronate ketol-isomerase (278 aa).

Positions 196, 198, 203, and 245 each coordinate Zn(2+).

This sequence belongs to the KduI family. Zn(2+) serves as cofactor.

It catalyses the reaction 5-dehydro-4-deoxy-D-glucuronate = 3-deoxy-D-glycero-2,5-hexodiulosonate. The protein operates within glycan metabolism; pectin degradation; 2-dehydro-3-deoxy-D-gluconate from pectin: step 4/5. Functionally, catalyzes the isomerization of 5-dehydro-4-deoxy-D-glucuronate to 3-deoxy-D-glycero-2,5-hexodiulosonate. In Salmonella agona (strain SL483), this protein is 4-deoxy-L-threo-5-hexosulose-uronate ketol-isomerase.